We begin with the raw amino-acid sequence, 319 residues long: Acetyl-coenzyme A carboxylase carboxyl transferase subunit alpha (319 aa).

The region spanning Asn-35–Asp-296 is the CoA carboxyltransferase C-terminal domain.

The protein belongs to the AccA family. In terms of assembly, acetyl-CoA carboxylase is a heterohexamer composed of biotin carboxyl carrier protein (AccB), biotin carboxylase (AccC) and two subunits each of ACCase subunit alpha (AccA) and ACCase subunit beta (AccD).

It is found in the cytoplasm. It carries out the reaction N(6)-carboxybiotinyl-L-lysyl-[protein] + acetyl-CoA = N(6)-biotinyl-L-lysyl-[protein] + malonyl-CoA. It participates in lipid metabolism; malonyl-CoA biosynthesis; malonyl-CoA from acetyl-CoA: step 1/1. Component of the acetyl coenzyme A carboxylase (ACC) complex. First, biotin carboxylase catalyzes the carboxylation of biotin on its carrier protein (BCCP) and then the CO(2) group is transferred by the carboxyltransferase to acetyl-CoA to form malonyl-CoA. The chain is Acetyl-coenzyme A carboxylase carboxyl transferase subunit alpha from Pectobacterium atrosepticum (strain SCRI 1043 / ATCC BAA-672) (Erwinia carotovora subsp. atroseptica).